A 160-amino-acid polypeptide reads, in one-letter code: Leptin (160 aa).

The N-terminal stretch at 1–17 (MDYTLALALSLLQLSMC) is a signal peptide. Cysteine 109 and cysteine 160 are joined by a disulfide.

The protein belongs to the leptin family.

It is found in the secreted. Functionally, may function as part of a signaling pathway that acts to regulate the size of the body fat depot. The polypeptide is Leptin (lep) (Tetraodon nigroviridis (Spotted green pufferfish)).